The chain runs to 216 residues: Adenylate kinase (216 aa).

10–15 provides a ligand contact to ATP; that stretch reads GAGKGT. The NMP stretch occupies residues 30 to 59; it reads STGDMFRAAIKEGTPLGLQAKEYMDRGDLV. AMP is bound by residues Thr-31, Arg-36, 57–59, 85–88, and Gln-92; these read DLV and GFPR. Residues 126–163 form an LID region; that stretch reads GRRICKNCGATYHLVFNPPAKSGVCDKCGGELYQRADD. Arg-127 contributes to the ATP binding site. Zn(2+) contacts are provided by Cys-130 and Cys-133. 136–137 is a binding site for ATP; that stretch reads TY. Zn(2+)-binding residues include Cys-150 and Cys-153. 2 residues coordinate AMP: Arg-160 and Arg-171. Gln-199 provides a ligand contact to ATP.

This sequence belongs to the adenylate kinase family. In terms of assembly, monomer.

It is found in the cytoplasm. The enzyme catalyses AMP + ATP = 2 ADP. Its pathway is purine metabolism; AMP biosynthesis via salvage pathway; AMP from ADP: step 1/1. In terms of biological role, catalyzes the reversible transfer of the terminal phosphate group between ATP and AMP. Plays an important role in cellular energy homeostasis and in adenine nucleotide metabolism. This chain is Adenylate kinase, found in Geobacillus sp. (strain WCH70).